A 220-amino-acid polypeptide reads, in one-letter code: Deoxyribose-phosphate aldolase (220 aa).

Aspartate 89 acts as the Proton donor/acceptor in catalysis. Residue lysine 151 is the Schiff-base intermediate with acetaldehyde of the active site. Lysine 180 serves as the catalytic Proton donor/acceptor.

Belongs to the DeoC/FbaB aldolase family. DeoC type 1 subfamily.

The protein resides in the cytoplasm. It carries out the reaction 2-deoxy-D-ribose 5-phosphate = D-glyceraldehyde 3-phosphate + acetaldehyde. The protein operates within carbohydrate degradation; 2-deoxy-D-ribose 1-phosphate degradation; D-glyceraldehyde 3-phosphate and acetaldehyde from 2-deoxy-alpha-D-ribose 1-phosphate: step 2/2. Catalyzes a reversible aldol reaction between acetaldehyde and D-glyceraldehyde 3-phosphate to generate 2-deoxy-D-ribose 5-phosphate. The chain is Deoxyribose-phosphate aldolase from Staphylococcus saprophyticus subsp. saprophyticus (strain ATCC 15305 / DSM 20229 / NCIMB 8711 / NCTC 7292 / S-41).